Here is a 198-residue protein sequence, read N- to C-terminus: Acyl carrier protein phosphodiesterase (198 aa).

Belongs to the AcpH family.

It carries out the reaction holo-[ACP] + H2O = apo-[ACP] + (R)-4'-phosphopantetheine + H(+). Functionally, converts holo-ACP to apo-ACP by hydrolytic cleavage of the phosphopantetheine prosthetic group from ACP. The polypeptide is Acyl carrier protein phosphodiesterase (Photorhabdus laumondii subsp. laumondii (strain DSM 15139 / CIP 105565 / TT01) (Photorhabdus luminescens subsp. laumondii)).